We begin with the raw amino-acid sequence, 281 residues long: 2-dehydro-3-deoxyphosphooctonate aldolase (281 aa).

Belongs to the KdsA family.

It localises to the cytoplasm. It carries out the reaction D-arabinose 5-phosphate + phosphoenolpyruvate + H2O = 3-deoxy-alpha-D-manno-2-octulosonate-8-phosphate + phosphate. It functions in the pathway carbohydrate biosynthesis; 3-deoxy-D-manno-octulosonate biosynthesis; 3-deoxy-D-manno-octulosonate from D-ribulose 5-phosphate: step 2/3. It participates in bacterial outer membrane biogenesis; lipopolysaccharide biosynthesis. This chain is 2-dehydro-3-deoxyphosphooctonate aldolase, found in Janthinobacterium sp. (strain Marseille) (Minibacterium massiliensis).